Here is a 98-residue protein sequence, read N- to C-terminus: Gas vesicle protein J2 (98 aa).

The segment at 75–98 (AGVDADDSKSVLERPDPPTTEGSE) is disordered. Positions 80–90 (DDSKSVLERPD) are enriched in basic and acidic residues.

This sequence belongs to the gas vesicle GvpA family. As to quaternary structure, gvpF to GvpM interact with each other in vitro, and may form multi-subunit complex(es). Interacts with GvpA.

Its subcellular location is the gas vesicle. Functionally, a minor component of the gas vesicle. Proteins GvpF to GvpM might be involved in nucleating gas vesicle formation. Gas vesicles are hollow, gas filled proteinaceous nanostructures found in several microbial planktonic microorganisms. They allow positioning of halobacteria at the optimal depth for growth in the poorly aerated, shallow brine pools of their habitat. In terms of biological role, expression of 2 c-vac DNA fragments containing 2 divergently transcribed regions (gvpE-gvpF-gvpG-gvpH-gvpI-gvpJ-gvpK-gvpL-gvpM and gvpA-gvpC-gvpN-gvpO) allows H.volcanii to produce gas vesicles. The sequence is that of Gas vesicle protein J2 from Halobacterium salinarum (strain ATCC 700922 / JCM 11081 / NRC-1) (Halobacterium halobium).